The chain runs to 398 residues: Cytochrome b (398 aa).

Residues 45-65 (LGSIAGIALVIQIITGVILAM) traverse the membrane as a helical segment. 2 residues coordinate heme b: His-95 and His-109. The next 8 helical transmembrane spans lie at 97–117 (VGAS…LYYG), 129–149 (IGII…VLPW), 164–184 (FSAI…GFSV), 192–212 (FFSL…LHLL), 245–265 (FVGF…EPNY), 304–324 (LAGV…PWLD), 335–355 (PIYR…GYLG), and 364–384 (IIIS…VLPL). Heme b contacts are provided by His-196 and His-210.

This sequence belongs to the cytochrome b family. In terms of assembly, the main subunits of complex b-c1 are: cytochrome b, cytochrome c1 and the Rieske protein. Heme b serves as cofactor.

It localises to the cell membrane. Functionally, component of the ubiquinol-cytochrome c reductase complex (complex III or cytochrome b-c1 complex), which is a respiratory chain that generates an electrochemical potential coupled to ATP synthesis. This is Cytochrome b (petB) from Rickettsia typhi (strain ATCC VR-144 / Wilmington).